The sequence spans 210 residues: uncharacterized protein (210 aa).

This is an uncharacterized protein from Acanthamoeba polyphaga (Amoeba).